The sequence spans 296 residues: Iron(3+)-hydroxamate-binding protein FhuD (296 aa).

Positions 1–30 form a signal peptide, tat-type signal; that stretch reads MSGLPLISRRRLLTAMALSPLLWQMNTAHA. Residues 37 to 296 form the Fe/B12 periplasmic-binding domain; that stretch reads RIVALEWLPV…VLDNAIGGKA (260 aa). Fe(III)-coprogen contacts are provided by W68, R84, S103, Y106, F124, W217, W273, F274, and Y275.

This sequence belongs to the bacterial solute-binding protein 8 family. The complex is composed of two ATP-binding proteins (FhuC), a transmembrane protein (FhuB) and a solute-binding protein (FhuD). FhuD interacts with FhuB. Substrate-loaded FhuD binds FhuB more strongly than FhuD alone. In terms of processing, exported by the Tat system. The position of the signal peptide cleavage has been experimentally proven. Can also be exported by the Sec system.

It is found in the periplasm. Part of the ABC transporter complex FhuCDB involved in iron(3+)-hydroxamate import. Binds the iron(3+)-hydroxamate complex and transfers it to the membrane-bound permease. Required for the transport of all iron(3+)-hydroxamate siderophores such as ferrichrome, gallichrome, desferrioxamine, coprogen, aerobactin, shizokinen, rhodotorulic acid and the antibiotic albomycin. In Escherichia coli (strain K12), this protein is Iron(3+)-hydroxamate-binding protein FhuD (fhuD).